Here is a 294-residue protein sequence, read N- to C-terminus: 4-diphosphocytidyl-2-C-methyl-D-erythritol kinase (294 aa).

Residue lysine 15 is part of the active site. Proline 101–serine 111 lines the ATP pocket. Residue aspartate 143 is part of the active site.

The protein belongs to the GHMP kinase family. IspE subfamily.

The enzyme catalyses 4-CDP-2-C-methyl-D-erythritol + ATP = 4-CDP-2-C-methyl-D-erythritol 2-phosphate + ADP + H(+). Its pathway is isoprenoid biosynthesis; isopentenyl diphosphate biosynthesis via DXP pathway; isopentenyl diphosphate from 1-deoxy-D-xylulose 5-phosphate: step 3/6. Catalyzes the phosphorylation of the position 2 hydroxy group of 4-diphosphocytidyl-2C-methyl-D-erythritol. The protein is 4-diphosphocytidyl-2-C-methyl-D-erythritol kinase of Fusobacterium nucleatum subsp. nucleatum (strain ATCC 25586 / DSM 15643 / BCRC 10681 / CIP 101130 / JCM 8532 / KCTC 2640 / LMG 13131 / VPI 4355).